The sequence spans 512 residues: Maturase K (512 aa).

Belongs to the intron maturase 2 family. MatK subfamily.

It localises to the plastid. It is found in the chloroplast. Usually encoded in the trnK tRNA gene intron. Probably assists in splicing its own and other chloroplast group II introns. This Soldanella alpina (Alpine snowbell) protein is Maturase K.